A 470-amino-acid chain; its full sequence is Glutamate--tRNA ligase (470 aa).

The short motif at 9–19 is the 'HIGH' region element; that stretch reads PSPTGFLHVGG. The short motif at 236–240 is the 'KMSKS' region element; sequence RLSKR. K239 lines the ATP pocket.

It belongs to the class-I aminoacyl-tRNA synthetase family. Glutamate--tRNA ligase type 1 subfamily. As to quaternary structure, monomer.

It is found in the cytoplasm. The catalysed reaction is tRNA(Glu) + L-glutamate + ATP = L-glutamyl-tRNA(Glu) + AMP + diphosphate. Its function is as follows. Catalyzes the attachment of glutamate to tRNA(Glu) in a two-step reaction: glutamate is first activated by ATP to form Glu-AMP and then transferred to the acceptor end of tRNA(Glu). This is Glutamate--tRNA ligase from Legionella pneumophila subsp. pneumophila (strain Philadelphia 1 / ATCC 33152 / DSM 7513).